The following is a 113-amino-acid chain: U11-theraphotoxin-Hhn1a (113 aa).

Residues 1-21 form the signal peptide; it reads MNTVRVTFLPVFVLAVSLGQA. Positions 22-74 are excised as a propeptide; that stretch reads DKDENRMEMQEKTEQGKSYLDFAENLLLQKLEELEAKLLEEDSEESRNSRQKR. Residues 61–83 form a disordered region; the sequence is EEDSEESRNSRQKRCIGEGVPCD. Cystine bridges form between Cys-75/Cys-90, Cys-82/Cys-95, and Cys-89/Cys-110.

The protein belongs to the neurotoxin 14 (magi-1) family. 01 (HNTX-16) subfamily. In terms of tissue distribution, expressed by the venom gland.

It is found in the secreted. The protein is U11-theraphotoxin-Hhn1a of Cyriopagopus hainanus (Chinese bird spider).